We begin with the raw amino-acid sequence, 136 residues long: HTH-type transcriptional regulator CysB (136 aa).

One can recognise an HTH lysR-type domain in the interval 1–59 (MDVRQLRSLVTLVEVRFSVSRAAECLHLVQSAVTQHLKQLEAELGTRLFVRHGKRLVGL). Residues 19–38 (VSRAAECLHLVQSAVTQHLK) constitute a DNA-binding region (H-T-H motif).

Belongs to the LysR transcriptional regulatory family.

Its function is as follows. This protein is a positive regulator of gene expression for the cysteine regulon. The protein is HTH-type transcriptional regulator CysB (cysB) of Thiocapsa roseopersicina.